The sequence spans 104 residues: uncharacterized protein (104 aa).

Residues 42 to 104 (ARDSFDQDFE…AREERHKLGR (63 aa)) are a coiled coil.

Belongs to the WXG100 family.

This is an uncharacterized protein from Bacillus subtilis (strain 168).